The primary structure comprises 90 residues: Protein Z600 (90 aa).

Phosphothreonine is present on residues T22 and T48. Residues 46–65 (PATPSSSGHGKFQTELKKRR) form a disordered region.

Component of the Frs-CycA-Cdk1 complex composed of Z600, CycA and Cdk1. Interacts preferentially with CycA (via C-terminus) but is also able to interact (via C-terminus) with CycE (via C-terminus).

It is found in the nucleus. Its function is as follows. Cell cycle regulator that is involved in modulating and adjusting cell proliferation according to the requirements of the developmental program. Interacts with mitotic Cdk1-cyclin complexes to inhibit mitotic entry at the G2/M transition. Likely to function by binding to the hydrophobic patch of cyclins to interfere with the interaction between the complex and certain Cdk1 substrates. At the mid-blastula transition, involved in the cell cycle arrest in G2 of cycle 14 by delaying mitosis and thus reducing cell proliferation allowing cell fate specification and morphogenesis to take place. Acts downstream or in parallel to the checkpoint regulator grp which is also required for the cell cycle pause at cycle 14. During gastrulation, delays mitosis in the ventral region of the embryonic mesoderm thus allowing invagination to be completed before cell division takes place. The chain is Protein Z600 from Drosophila melanogaster (Fruit fly).